Here is a 504-residue protein sequence, read N- to C-terminus: ATP synthase subunit alpha, chloroplastic (504 aa).

170–177 (GDRQTGKT) provides a ligand contact to ATP.

It belongs to the ATPase alpha/beta chains family. As to quaternary structure, F-type ATPases have 2 components, CF(1) - the catalytic core - and CF(0) - the membrane proton channel. CF(1) has five subunits: alpha(3), beta(3), gamma(1), delta(1), epsilon(1). CF(0) has four main subunits: a, b, b' and c.

Its subcellular location is the plastid. It localises to the chloroplast thylakoid membrane. The enzyme catalyses ATP + H2O + 4 H(+)(in) = ADP + phosphate + 5 H(+)(out). Functionally, produces ATP from ADP in the presence of a proton gradient across the membrane. The alpha chain is a regulatory subunit. This chain is ATP synthase subunit alpha, chloroplastic, found in Hordeum vulgare (Barley).